Reading from the N-terminus, the 163-residue chain is Globin CTT-Z (163 aa).

The N-terminal stretch at 1–16 (MKFFAVLALCIVGAIA) is a signal peptide. In terms of domain architecture, Globin spans 18–162 (PLTSDEAALV…VYTAVFQIVT (145 aa)). His-76 and His-111 together coordinate heme b.

The protein belongs to the globin family.

This Chironomus thummi thummi (Midge) protein is Globin CTT-Z (CTT-Z).